Here is a 33-residue protein sequence, read N- to C-terminus: Brevinin-2HSa (33 aa).

Residues Cys-27 and Cys-33 are joined by a disulfide bond.

As to expression, expressed by the skin glands.

It is found in the secreted. In terms of biological role, has antibacterial activity against the Gram-positive bacterium S.aureus ATCC 25923 (MIC=18 uM) and the Gram-negative bacterium E.coli ATCC 25726 (MIC=36 uM). In Odorrana hosii (Hose's rock frog), this protein is Brevinin-2HSa.